The sequence spans 242 residues: Biosynthetic peptidoglycan transglycosylase (242 aa).

The helical transmembrane segment at 12 to 32 (LLLWLIALSVLLVLLLRWVPP) threads the bilayer.

The protein belongs to the glycosyltransferase 51 family.

The protein resides in the cell inner membrane. The catalysed reaction is [GlcNAc-(1-&gt;4)-Mur2Ac(oyl-L-Ala-gamma-D-Glu-L-Lys-D-Ala-D-Ala)](n)-di-trans,octa-cis-undecaprenyl diphosphate + beta-D-GlcNAc-(1-&gt;4)-Mur2Ac(oyl-L-Ala-gamma-D-Glu-L-Lys-D-Ala-D-Ala)-di-trans,octa-cis-undecaprenyl diphosphate = [GlcNAc-(1-&gt;4)-Mur2Ac(oyl-L-Ala-gamma-D-Glu-L-Lys-D-Ala-D-Ala)](n+1)-di-trans,octa-cis-undecaprenyl diphosphate + di-trans,octa-cis-undecaprenyl diphosphate + H(+). The protein operates within cell wall biogenesis; peptidoglycan biosynthesis. In terms of biological role, peptidoglycan polymerase that catalyzes glycan chain elongation from lipid-linked precursors. The polypeptide is Biosynthetic peptidoglycan transglycosylase (Stutzerimonas stutzeri (strain A1501) (Pseudomonas stutzeri)).